The primary structure comprises 502 residues: Glycerol kinase (502 aa).

Thr14 serves as a coordination point for ADP. ATP is bound by residues Thr14, Thr15, and Ser16. Thr14 contributes to the sn-glycerol 3-phosphate binding site. Arg18 lines the ADP pocket. Sn-glycerol 3-phosphate contacts are provided by Arg84, Glu85, Tyr136, and Asp246. Arg84, Glu85, Tyr136, Asp246, and Gln247 together coordinate glycerol. Residues Thr268 and Gly311 each contribute to the ADP site. ATP contacts are provided by Thr268, Gly311, Gln315, and Gly412. Gly412 and Asn416 together coordinate ADP.

Belongs to the FGGY kinase family. As to quaternary structure, homotetramer and homodimer (in equilibrium). Heterodimer with EIIA-Glc. Binds 1 zinc ion per glycerol kinase EIIA-Glc dimer. The zinc ion is important for dimerization.

It carries out the reaction glycerol + ATP = sn-glycerol 3-phosphate + ADP + H(+). Its pathway is polyol metabolism; glycerol degradation via glycerol kinase pathway; sn-glycerol 3-phosphate from glycerol: step 1/1. Activity of this regulatory enzyme is affected by several metabolites. Allosterically and non-competitively inhibited by fructose 1,6-bisphosphate (FBP) and unphosphorylated phosphocarrier protein EIIA-Glc (III-Glc), an integral component of the bacterial phosphotransferase (PTS) system. Key enzyme in the regulation of glycerol uptake and metabolism. Catalyzes the phosphorylation of glycerol to yield sn-glycerol 3-phosphate. This Salmonella heidelberg (strain SL476) protein is Glycerol kinase.